The sequence spans 117 residues: Large ribosomal subunit protein uL18 (117 aa).

This sequence belongs to the universal ribosomal protein uL18 family. Part of the 50S ribosomal subunit; part of the 5S rRNA/L5/L18/L25 subcomplex. Contacts the 5S and 23S rRNAs.

Functionally, this is one of the proteins that bind and probably mediate the attachment of the 5S RNA into the large ribosomal subunit, where it forms part of the central protuberance. This Haemophilus influenzae (strain 86-028NP) protein is Large ribosomal subunit protein uL18.